The chain runs to 123 residues: Ribonuclease P protein component (123 aa).

It belongs to the RnpA family. Consists of a catalytic RNA component (M1 or rnpB) and a protein subunit.

The enzyme catalyses Endonucleolytic cleavage of RNA, removing 5'-extranucleotides from tRNA precursor.. Its function is as follows. RNaseP catalyzes the removal of the 5'-leader sequence from pre-tRNA to produce the mature 5'-terminus. It can also cleave other RNA substrates such as 4.5S RNA. The protein component plays an auxiliary but essential role in vivo by binding to the 5'-leader sequence and broadening the substrate specificity of the ribozyme. This Streptomyces griseus subsp. griseus (strain JCM 4626 / CBS 651.72 / NBRC 13350 / KCC S-0626 / ISP 5235) protein is Ribonuclease P protein component.